Consider the following 419-residue polypeptide: L-rhamnose isomerase (419 aa).

Histidine 262, aspartate 294, and aspartate 296 together coordinate Mn(2+).

The protein belongs to the rhamnose isomerase family. In terms of assembly, homotetramer. Requires Mn(2+) as cofactor.

The protein localises to the cytoplasm. It catalyses the reaction L-rhamnopyranose = L-rhamnulose. It participates in carbohydrate degradation; L-rhamnose degradation; glycerone phosphate from L-rhamnose: step 1/3. Functionally, catalyzes the interconversion of L-rhamnose and L-rhamnulose. This chain is L-rhamnose isomerase, found in Salmonella agona (strain SL483).